A 413-amino-acid chain; its full sequence is Probable tRNA pseudouridine synthase D (413 aa).

Catalysis depends on aspartate 97, which acts as the Nucleophile. Positions 167–370 (AAPNYYGYQR…YGTYRRVRLE (204 aa)) constitute a TRUD domain.

Belongs to the pseudouridine synthase TruD family.

The catalysed reaction is uridine(13) in tRNA = pseudouridine(13) in tRNA. Its function is as follows. Could be responsible for synthesis of pseudouridine from uracil-13 in transfer RNAs. This chain is Probable tRNA pseudouridine synthase D, found in Pyrobaculum aerophilum (strain ATCC 51768 / DSM 7523 / JCM 9630 / CIP 104966 / NBRC 100827 / IM2).